The chain runs to 75 residues: Microcin H47 (75 aa).

A propeptide spanning residues 1–15 (MREITESQLRYISGA) is cleaved from the precursor. A helical membrane pass occupies residues 30–50 (AIVGALAGIPGGPLGVVVGAV).

It is found in the secreted. Its subcellular location is the host cell membrane. Bactericidal antibiotic. Active on bacteria phylogenetically related to the producing strain. This is Microcin H47 (mchB) from Escherichia coli O6:H1 (strain CFT073 / ATCC 700928 / UPEC).